A 224-amino-acid polypeptide reads, in one-letter code: LexA repressor (224 aa).

Positions 38 to 58 (IREIGDAVGLTSTSSVAHQLR) form a DNA-binding region, H-T-H motif. Residues 71–82 (NRPRAVDVRGID) are compositionally biased toward basic and acidic residues. The interval 71-96 (NRPRAVDVRGIDDAGTPSATTDVIGS) is disordered. Active-site for autocatalytic cleavage activity residues include Ser-148 and Lys-185.

It belongs to the peptidase S24 family. In terms of assembly, homodimer.

The catalysed reaction is Hydrolysis of Ala-|-Gly bond in repressor LexA.. Represses a number of genes involved in the response to DNA damage (SOS response), including recA and lexA. In the presence of single-stranded DNA, RecA interacts with LexA causing an autocatalytic cleavage which disrupts the DNA-binding part of LexA, leading to derepression of the SOS regulon and eventually DNA repair. The chain is LexA repressor from Mycobacteroides abscessus (strain ATCC 19977 / DSM 44196 / CCUG 20993 / CIP 104536 / JCM 13569 / NCTC 13031 / TMC 1543 / L948) (Mycobacterium abscessus).